A 331-amino-acid chain; its full sequence is Doxorubicin resistance ATP-binding protein DrrA (331 aa).

The region spanning 8-240 (VVVNGVRKTY…AGDTFCEIVP (233 aa)) is the ABC transporter domain. An ATP-binding site is contributed by 42-49 (GPNGAGKT).

This sequence belongs to the ABC transporter superfamily. Drug exporter-1 (DrugE1) (TC 3.A.1.105) family. As to quaternary structure, the complex is composed of two ATP-binding proteins (DrrA) and two transmembrane proteins (DrrB and DrrC).

It localises to the cell membrane. Part of the ABC transporter complex DrrABC involved in doxorubicin resistance. Responsible for energy coupling to the transport system. Binds ATP. The polypeptide is Doxorubicin resistance ATP-binding protein DrrA (drrA) (Mycobacterium tuberculosis (strain CDC 1551 / Oshkosh)).